We begin with the raw amino-acid sequence, 662 residues long: Chaperone protein HtpG (662 aa).

Positions 1 to 352 (MSKQTLSFQA…SADLPLNVSR (352 aa)) are a; substrate-binding. The segment at 353–594 (ELLQESRDVR…GDGMSTQLAR (242 aa)) is b. Positions 382 to 402 (HDRHDSPAPQPAEGADRVSDV) are disordered. Positions 595–662 (LLKQAGQQAP…YVKRVNALLV (68 aa)) are c.

The protein belongs to the heat shock protein 90 family. In terms of assembly, homodimer.

The protein resides in the cytoplasm. In terms of biological role, molecular chaperone. Has ATPase activity. The sequence is that of Chaperone protein HtpG from Verminephrobacter eiseniae (strain EF01-2).